Here is a 391-residue protein sequence, read N- to C-terminus: Mannose-6-phosphate isomerase (391 aa).

Residues Gln97, His99, Glu134, and His255 each coordinate Zn(2+). The active site involves Arg274.

Belongs to the mannose-6-phosphate isomerase type 1 family. Zn(2+) serves as cofactor.

The protein resides in the cytoplasm. The enzyme catalyses D-mannose 6-phosphate = D-fructose 6-phosphate. In terms of biological role, involved in the conversion of glucose to GDP-L-fucose, which can be converted to L-fucose, a capsular polysaccharide. This is Mannose-6-phosphate isomerase (manA) from Salmonella typhimurium (strain LT2 / SGSC1412 / ATCC 700720).